Reading from the N-terminus, the 24-residue chain is Heptapoietin A light chain (24 aa).

As to quaternary structure, heterodimer of a heavy and a light chain linked by disulfide bond(s).

Functionally, HPTA is an acidic heparin-binding growth factor for hepatocytes. In Oryctolagus cuniculus (Rabbit), this protein is Heptapoietin A light chain.